Reading from the N-terminus, the 420-residue chain is Probable protein phosphatase 2C 76 (420 aa).

In terms of domain architecture, PPM-type phosphatase spans 101-347 (SCGYCSFRGK…DNITCIVVKF (247 aa)). Mn(2+) is bound by residues Asp137, Gly138, Asp299, and Asp338. The disordered stretch occupies residues 353 to 420 (ESPKIETNAM…PETKGEKAGE (68 aa)). Residues 403-420 (PDPKPETEPETKGEKAGE) are compositionally biased toward basic and acidic residues.

Belongs to the PP2C family. Mg(2+) serves as cofactor. The cofactor is Mn(2+).

It catalyses the reaction O-phospho-L-seryl-[protein] + H2O = L-seryl-[protein] + phosphate. It carries out the reaction O-phospho-L-threonyl-[protein] + H2O = L-threonyl-[protein] + phosphate. The sequence is that of Probable protein phosphatase 2C 76 from Arabidopsis thaliana (Mouse-ear cress).